We begin with the raw amino-acid sequence, 192 residues long: Early nodulin-like protein 7 (192 aa).

A signal peptide spans 1–27; sequence MMMMMMRSTCNLTLMLCICALVVASMA. Positions 32-134 constitute a Phytocyanin domain; the sequence is RDFKVGDEFG…GQRLIVEVMH (103 aa). N48, N89, and N101 each carry an N-linked (GlcNAc...) asparagine glycan. Residues C88 and C122 are joined by a disulfide bond. The GPI-anchor amidated serine moiety is linked to residue S166. A propeptide spans 167-192 (removed in mature form); sequence AASSLPTACLLIPLFLTIASFRFISY.

This sequence belongs to the early nodulin-like (ENODL) family. In terms of tissue distribution, mostly expressed in flowers, and, to a lower extent, in seeds, but barely in seedlings, stems, leaves and roots.

Its subcellular location is the cell membrane. Functionally, may act as a carbohydrate transporter. The sequence is that of Early nodulin-like protein 7 from Arabidopsis thaliana (Mouse-ear cress).